Consider the following 173-residue polypeptide: uncharacterized protein (173 aa).

The segment at 1–23 is disordered; that stretch reads ELTSVAGSGRVDSTPLGSRGVTD.

In terms of tissue distribution, component of the acid-insoluble and acid-soluble organic matrix of calcified layers of the shell (at protein level).

The protein localises to the secreted. This is an uncharacterized protein from Lottia gigantea (Giant owl limpet).